The primary structure comprises 248 residues: 4-hydroxy-tetrahydrodipicolinate reductase (248 aa).

Residues 9 to 14, 77 to 79, and 104 to 107 each bind NAD(+); these read GAKGRV, GTT, and APNF. The active-site Proton donor/acceptor is the histidine 134. Histidine 135 is a (S)-2,3,4,5-tetrahydrodipicolinate binding site. The active-site Proton donor is lysine 138. Position 144–145 (144–145) interacts with (S)-2,3,4,5-tetrahydrodipicolinate; the sequence is GT.

The protein belongs to the DapB family.

It is found in the cytoplasm. It carries out the reaction (S)-2,3,4,5-tetrahydrodipicolinate + NAD(+) + H2O = (2S,4S)-4-hydroxy-2,3,4,5-tetrahydrodipicolinate + NADH + H(+). The catalysed reaction is (S)-2,3,4,5-tetrahydrodipicolinate + NADP(+) + H2O = (2S,4S)-4-hydroxy-2,3,4,5-tetrahydrodipicolinate + NADPH + H(+). The protein operates within amino-acid biosynthesis; L-lysine biosynthesis via DAP pathway; (S)-tetrahydrodipicolinate from L-aspartate: step 4/4. In terms of biological role, catalyzes the conversion of 4-hydroxy-tetrahydrodipicolinate (HTPA) to tetrahydrodipicolinate. The protein is 4-hydroxy-tetrahydrodipicolinate reductase of Corynebacterium glutamicum (strain ATCC 13032 / DSM 20300 / JCM 1318 / BCRC 11384 / CCUG 27702 / LMG 3730 / NBRC 12168 / NCIMB 10025 / NRRL B-2784 / 534).